Reading from the N-terminus, the 376-residue chain is Glucose-1-phosphate adenylyltransferase (376 aa).

Alpha-D-glucose 1-phosphate contacts are provided by residues Tyr-101, Gly-166, 181–182, and Ser-192; that span reads EK.

The protein belongs to the bacterial/plant glucose-1-phosphate adenylyltransferase family. In terms of assembly, homotetramer.

The catalysed reaction is alpha-D-glucose 1-phosphate + ATP + H(+) = ADP-alpha-D-glucose + diphosphate. It participates in glycan biosynthesis; glycogen biosynthesis. In terms of biological role, involved in the biosynthesis of ADP-glucose, a building block required for the elongation reactions to produce glycogen. Catalyzes the reaction between ATP and alpha-D-glucose 1-phosphate (G1P) to produce pyrophosphate and ADP-Glc. The protein is Glucose-1-phosphate adenylyltransferase of Bacillus cytotoxicus (strain DSM 22905 / CIP 110041 / 391-98 / NVH 391-98).